The primary structure comprises 115 residues: Nitrogen regulatory protein P-II 1 (115 aa).

Position 54 is an O-UMP-tyrosine (Tyr54).

The protein belongs to the P(II) protein family.

In terms of biological role, could be involved in the regulation of nitrogen fixation. The polypeptide is Nitrogen regulatory protein P-II 1 (Methanothermobacter thermautotrophicus (strain ATCC 29096 / DSM 1053 / JCM 10044 / NBRC 100330 / Delta H) (Methanobacterium thermoautotrophicum)).